A 591-amino-acid chain; its full sequence is Protein NRT1/ PTR FAMILY 1.1 (591 aa).

Helical transmembrane passes span 68–88 (TVLF…AFLS), 98–118 (IVIA…TAML), 139–159 (SSQL…SGGI), 186–206 (FFGW…TVIV), 216–236 (IGFG…VFAS), 329–349 (LKAL…SINV), 374–394 (IPAG…VVLY), 418–438 (MGLG…VEHY), 460–480 (AMWL…TGIG), 496–516 (IAAS…SVIL), and 543–563 (YYWV…VCSW).

This sequence belongs to the major facilitator superfamily. Proton-dependent oligopeptide transporter (POT/PTR) (TC 2.A.17) family. As to expression, expressed in siliques, shoots and roots. Mainly detected in larger expanded leaves, in the companion cells of major veins.

The protein localises to the cell membrane. Low-affinity nitrate transporter involved in xylem-to-phloem transfer for redistributing nitrate into developing leaves. Not involved in dipeptides transport. The chain is Protein NRT1/ PTR FAMILY 1.1 (NPF1.1) from Arabidopsis thaliana (Mouse-ear cress).